The primary structure comprises 352 residues: Gap junction alpha-4 protein (352 aa).

Residues 2–23 are Cytoplasmic-facing; it reads GDWEFLEKLLDQVQEHSTSIGK. Residues 24–46 form a helical membrane-spanning segment; the sequence is IWLMVLFIFRILILGLAGESVWG. Residues 47–76 are Extracellular-facing; it reads DEQSDFICNTEQPGCTNVCYDKAFPISHVR. The helical transmembrane segment at 77–99 threads the bilayer; that stretch reads YWVLQFLFVSTPTLFYLGHVIYL. Over 100-153 the chain is Cytoplasmic; sequence SRREEKLKQKESELRALDDKEQVEQAIAIIEKKKMKLYIQEDGTVKIKGALMCT. A helical membrane pass occupies residues 154-176; the sequence is YLTSVIFKSLFEAGFLLGQWYLY. Residues 177–208 are Extracellular-facing; sequence GFVMTPIYVCERVPCPHKVDCFVSRPMEKTIF. Residues 209-231 form a helical membrane-spanning segment; it reads IVFMLVVSLISLFLNVLELIHLV. Over 232–352 the chain is Cytoplasmic; the sequence is CKSMIDTLKK…SSSASKKQYV (121 aa). The segment at 330 to 352 is disordered; that stretch reads KTHSTMEKPSTRASSSASKKQYV. A compositionally biased stretch (polar residues) spans 340-352; that stretch reads TRASSSASKKQYV.

Belongs to the connexin family. Alpha-type (group II) subfamily. In terms of assembly, a connexon is composed of a hexamer of connexins.

Its subcellular location is the cell membrane. It is found in the cell junction. The protein localises to the gap junction. Its function is as follows. One gap junction consists of a cluster of closely packed pairs of transmembrane channels, the connexons, through which materials of low MW diffuse from one cell to a neighboring cell. The chain is Gap junction alpha-4 protein (gja4) from Xenopus tropicalis (Western clawed frog).